A 587-amino-acid polypeptide reads, in one-letter code: Zinc finger protein 496 (587 aa).

The interval 1 to 40 (MPTALCPRVLAPKESEEPRKMRSPPGENPSPQGELPSPES) is disordered. Positions 11 to 20 (APKESEEPRK) are enriched in basic and acidic residues. Lys-13 is covalently cross-linked (Glycyl lysine isopeptide (Lys-Gly) (interchain with G-Cter in SUMO2)). The 83-residue stretch at 42–124 (RRLFRRFRYQ…AAVEALEREP (83 aa)) folds into the SCAN box domain. Ser-185 carries the post-translational modification Phosphoserine. Residues 221–291 (SPFKDMILCF…ELQDLQGKEV (71 aa)) enclose the KRAB domain. The interval 260 to 282 (PPNDLAAQPDLSQGEENEPRVPE) is disordered. A Phosphoserine modification is found at Ser-299. Residues 358–399 (SSSGDEDSQHGPYCTEELGSPTEKQRSLPASHRSSTEAGGEV) are disordered. Residues 389 to 399 (HRSSTEAGGEV) are compositionally biased toward polar residues. Lys-403 participates in a covalent cross-link: Glycyl lysine isopeptide (Lys-Gly) (interchain with G-Cter in SUMO2). The segment at 406–428 (YVCPNCGKIFRWRVNFIRHLRSR) adopts a C2H2-type 1; degenerate zinc-finger fold. C2H2-type zinc fingers lie at residues 435-457 (HECS…LESH) and 463-485 (YRCG…RRIH). The interval 488-513 (PDRLQPVEKREQAASEDADKGPKEPL) is disordered. Lys-496 participates in a covalent cross-link: Glycyl lysine isopeptide (Lys-Gly) (interchain with G-Cter in SUMO2). C2H2-type zinc fingers lie at residues 522–545 (FQCC…SHFH) and 553–575 (FQCR…ERLH).

Belongs to the krueppel C2H2-type zinc-finger protein family. As to quaternary structure, interacts (via zinc-fingers) with JARID2. Interacts with NSD1.

The protein resides in the nucleus. Functionally, DNA-binding transcription factor that can both act as an activator and a repressor. This chain is Zinc finger protein 496 (ZNF496), found in Homo sapiens (Human).